The chain runs to 461 residues: Autophagy-related protein 6 (461 aa).

Positions 75–88 (EEHGTDSSPDHDSS) are enriched in basic and acidic residues. Disordered stretches follow at residues 75 to 94 (EEHGTDSSPDHDSSPDASLV) and 101 to 124 (EEPVPVSAPSPESSEADGPNPISG). Positions 103 to 113 (PVPVSAPSPES) are enriched in low complexity. The stretch at 194–286 (TKLRDSIQEC…VLNRLDHLRN (93 aa)) forms a coiled coil.

Belongs to the beclin family.

In terms of biological role, required for cytoplasm to vacuole transport (Cvt) and autophagy. Also involved in endosome-to-Golgi retrograde transport. This is Autophagy-related protein 6 (ATG6) from Meyerozyma guilliermondii (strain ATCC 6260 / CBS 566 / DSM 6381 / JCM 1539 / NBRC 10279 / NRRL Y-324) (Yeast).